The chain runs to 420 residues: Serine hydroxymethyltransferase (420 aa).

(6S)-5,6,7,8-tetrahydrofolate-binding positions include Leu-123 and 127 to 129 (GHL). At Lys-232 the chain carries N6-(pyridoxal phosphate)lysine. 357–359 (SPF) contributes to the (6S)-5,6,7,8-tetrahydrofolate binding site.

The protein belongs to the SHMT family. Homodimer. Requires pyridoxal 5'-phosphate as cofactor.

It localises to the cytoplasm. The enzyme catalyses (6R)-5,10-methylene-5,6,7,8-tetrahydrofolate + glycine + H2O = (6S)-5,6,7,8-tetrahydrofolate + L-serine. It functions in the pathway one-carbon metabolism; tetrahydrofolate interconversion. It participates in amino-acid biosynthesis; glycine biosynthesis; glycine from L-serine: step 1/1. Functionally, catalyzes the reversible interconversion of serine and glycine with tetrahydrofolate (THF) serving as the one-carbon carrier. This reaction serves as the major source of one-carbon groups required for the biosynthesis of purines, thymidylate, methionine, and other important biomolecules. Also exhibits THF-independent aldolase activity toward beta-hydroxyamino acids, producing glycine and aldehydes, via a retro-aldol mechanism. The chain is Serine hydroxymethyltransferase from Streptococcus pyogenes serotype M2 (strain MGAS10270).